The chain runs to 244 residues: Phosphoadenosine 5'-phosphosulfate reductase (244 aa).

Catalysis depends on Cys239, which acts as the Nucleophile; cysteine thiosulfonate intermediate.

Belongs to the PAPS reductase family. CysH subfamily.

The protein resides in the cytoplasm. It carries out the reaction [thioredoxin]-disulfide + sulfite + adenosine 3',5'-bisphosphate + 2 H(+) = [thioredoxin]-dithiol + 3'-phosphoadenylyl sulfate. It functions in the pathway sulfur metabolism; hydrogen sulfide biosynthesis; sulfite from sulfate: step 3/3. Catalyzes the formation of sulfite from phosphoadenosine 5'-phosphosulfate (PAPS) using thioredoxin as an electron donor. The chain is Phosphoadenosine 5'-phosphosulfate reductase from Yersinia enterocolitica serotype O:8 / biotype 1B (strain NCTC 13174 / 8081).